Consider the following 139-residue polypeptide: uncharacterized protein (139 aa).

Residues 1-32 (MEFHDDKKNELQKKEEIITEAIDTLFQSSAFG) form the signal peptide. A sHSP domain is found at 44–139 (SSLKDVQTTI…TLFFPKNKHE (96 aa)).

It belongs to the small heat shock protein (HSP20) family.

This is an uncharacterized protein from Bacillus subtilis (strain 168).